Reading from the N-terminus, the 64-residue chain is Cecropin-A (64 aa).

Residues 1–22 (MNFSRIFFFVFACLTALAMVNA) form the signal peptide. Residues 23-26 (APEP) constitute a propeptide, removed by a dipeptidylpeptidase. Residue K63 is modified to Lysine amide.

It belongs to the cecropin family. Post-translationally, a protein with the same sequence as cecropin A, but lacking the carboxyl blocking group, has been isolated and called cecropin C.

The protein localises to the secreted. Cecropins have lytic and antibacterial activity against several Gram-positive and Gram-negative bacteria. The polypeptide is Cecropin-A (Hyalophora cecropia (Cecropia moth)).